Consider the following 106-residue polypeptide: Immunity protein CdiI (106 aa).

In terms of assembly, forms a contact-dependent growth inhibition complex of CdiA-CT-NC101, CdiI-NC101 and EF-Tu; the complex is a dimer of heterotrimers.

Functionally, immunity protein component of a toxin-immunity protein module, which functions as a cellular contact-dependent growth inhibition (CDI) system. CDI modules allow bacteria to communicate with and inhibit the growth of closely related neighboring bacteria in a contact-dependent fashion. Neutralizes the toxic activity of cognate toxin CdiA-NC101 (the C-terminal 154 residue CT fragment). Does not inhibit toxic activity of CdiA from other toxin-immunity modules or strains of E.coli. Mediates dimerization of the ternary CdiA-CT-NC101, CdiI-NC101 and EF-Tu complex; both CdiI molecules contact both EF-Tu molecules. In Escherichia coli (strain NC101), this protein is Immunity protein CdiI.